The primary structure comprises 406 residues: Calsequestrin-2 (406 aa).

The signal sequence occupies residues Met-1–Ala-19. Asn-335 carries N-linked (GlcNAc...) asparagine glycosylation. The disordered stretch occupies residues Val-365–Asp-406. Positions Glu-373–Asp-406 are enriched in acidic residues.

This sequence belongs to the calsequestrin family. As to expression, skeletal and heart muscle.

Its subcellular location is the sarcoplasmic reticulum lumen. Its function is as follows. Calsequestrin is a high-capacity, moderate affinity, calcium-binding protein and thus acts as an internal calcium store in muscle. Calcium ions are bound by clusters of acidic residues at the protein surface, especially at the interface between subunits. Can bind around 60 Ca(2+) ions. Regulates the release of lumenal Ca(2+) via the calcium release channel RYR2; this plays an important role in triggering muscle contraction. Plays a role in excitation-contraction coupling in the heart and in regulating the rate of heart beats. This is Calsequestrin-2 (CASQ2) from Gallus gallus (Chicken).